We begin with the raw amino-acid sequence, 1218 residues long: Formin-A (1218 aa).

In terms of domain architecture, C2 spans 1–108; it reads MADKLYQIKL…ILGEACNYSV (108 aa). The GBD/FH3 domain maps to 139–539; it reads EEKKRHDEIQ…QISLRDKNIG (401 aa). The stretch at 563-638 forms a coiled coil; that stretch reads LKSQIESLKK…QLKLTQGTAK (76 aa). Positions 634–762 are disordered; the sequence is QGTAKPDSAA…KAAAPPRKEV (129 aa). The segment covering 649 to 747 has biased composition (pro residues); that stretch reads APPPPPPPMT…FGKGPPPPPG (99 aa). The FH1 domain maps to 652–737; it reads PPPPPMTGGG…AGGPPPPPPP (86 aa). The FH2 domain occupies 759–1155; the sequence is RKEVPVPALK…IAKREAAKKL (397 aa). Positions 1034 to 1061 form a coiled coil; that stretch reads SLSQVQAEVATLRKEFVQVQKSIETLNS. 2 disordered regions span residues 1153–1179 and 1198–1218; these read KKLK…TVEV and KNRR…PIDL. The DAD domain maps to 1174–1209; it reads GETVEVKESVVDDLLDTIASGDAFKNRRRRARKTDQ.

The protein belongs to the formin homology family. Diaphanous subfamily. As to quaternary structure, interacts (via GBD/FH3 domain) with activated Rho-GTPases.

Functionally, formins play an important role in the nucleation of actin and the formation of linear actin filaments. The chain is Formin-A (forA) from Dictyostelium discoideum (Social amoeba).